Here is an 85-residue protein sequence, read N- to C-terminus: MAHKKAGGSTRNGRDSESKRLGVKRFGGESVLAGNIIVRQRGTKFHAGTNVGIGKDHTLFALSEGKVKFEVKGPKNRKFVSIDAE.

The segment at 1–22 (MAHKKAGGSTRNGRDSESKRLG) is disordered.

This sequence belongs to the bacterial ribosomal protein bL27 family.

The protein is Large ribosomal subunit protein bL27 of Aliivibrio salmonicida (strain LFI1238) (Vibrio salmonicida (strain LFI1238)).